The chain runs to 776 residues: Endonuclease MutS2 (776 aa).

330–337 provides a ligand contact to ATP; sequence GPNTGGKT. The Smr domain maps to 701–776; the sequence is LDLRGMRYEE…GSGATIAILK (76 aa).

It belongs to the DNA mismatch repair MutS family. MutS2 subfamily. Homodimer. Binds to stalled ribosomes, contacting rRNA.

Endonuclease that is involved in the suppression of homologous recombination and thus may have a key role in the control of bacterial genetic diversity. Its function is as follows. Acts as a ribosome collision sensor, splitting the ribosome into its 2 subunits. Detects stalled/collided 70S ribosomes which it binds and splits by an ATP-hydrolysis driven conformational change. Acts upstream of the ribosome quality control system (RQC), a ribosome-associated complex that mediates the extraction of incompletely synthesized nascent chains from stalled ribosomes and their subsequent degradation. Probably generates substrates for RQC. The chain is Endonuclease MutS2 from Lactococcus lactis subsp. lactis (strain IL1403) (Streptococcus lactis).